The sequence spans 465 residues: Cysteine--tRNA ligase (465 aa).

Cys-30 provides a ligand contact to Zn(2+). A 'HIGH' region motif is present at residues 32 to 42; the sequence is ITVYDYCHVGH. Positions 214, 239, and 243 each coordinate Zn(2+). Positions 271 to 275 match the 'KMSKS' region motif; that stretch reads KMSKS. Lys-274 lines the ATP pocket.

It belongs to the class-I aminoacyl-tRNA synthetase family. In terms of assembly, monomer. It depends on Zn(2+) as a cofactor.

It localises to the cytoplasm. It carries out the reaction tRNA(Cys) + L-cysteine + ATP = L-cysteinyl-tRNA(Cys) + AMP + diphosphate. This Burkholderia cenocepacia (strain ATCC BAA-245 / DSM 16553 / LMG 16656 / NCTC 13227 / J2315 / CF5610) (Burkholderia cepacia (strain J2315)) protein is Cysteine--tRNA ligase.